Here is an 80-residue protein sequence, read N- to C-terminus: MSQQKQQSWKPPNVPKCSPPQRSNPCLAPYSTPCGAPHSEGCHSSSQRPEVQKPRRARQKLRCLSRGTTYHCKEEECEGD.

The span at 1–10 (MSQQKQQSWK) shows a compositional bias: polar residues. Disordered stretches follow at residues 1–21 (MSQQ…SPPQ) and 35–60 (GAPH…ARQK).

This sequence belongs to the LCE family.

Its function is as follows. Precursors of the cornified envelope of the stratum corneum. In Homo sapiens (Human), this protein is Late cornified envelope protein 6A (LCE6A).